A 520-amino-acid chain; its full sequence is Developmental regulatory protein wetA (520 aa).

Polar residues-rich tracts occupy residues 109–118, 155–165, and 378–392; these read TATHALSISP, QSFSPSLMRSS, and SSQK…SQVH. 3 disordered regions span residues 109–165, 378–454, and 468–496; these read TATH…MRSS, SSQK…SNKS, and KKIL…RRRK. A compositionally biased stretch (basic residues) spans 420-429; it reads PTHRRTHSRK. The span at 445–454 shows a compositional bias: low complexity; the sequence is SSSSRGSNKS.

This sequence belongs to the wetA family.

BrlA, abaA and wetA are pivotal regulators of conidiophore development and conidium maturation. They act individually and together to regulate their own expression and that of numerous other sporulation-specific genes. This is Developmental regulatory protein wetA from Penicillium roqueforti (strain FM164).